The chain runs to 91 residues: Large ribosomal subunit protein eL34 (91 aa).

Residues 48 to 71 (RGRPVEMRKLPKTKKRPERPYPHL) are disordered.

The protein belongs to the eukaryotic ribosomal protein eL34 family.

The protein is Large ribosomal subunit protein eL34 (rpl34e) of Pyrococcus abyssi (strain GE5 / Orsay).